The chain runs to 274 residues: NAD(P)H-quinone oxidoreductase subunit K, chloroplastic (274 aa).

Composition is skewed to polar residues over residues methionine 1–serine 10 and serine 18–aspartate 27. Residues methionine 1 to aspartate 27 form a disordered region. 4 residues coordinate [4Fe-4S] cluster: cysteine 90, cysteine 91, cysteine 155, and cysteine 186.

This sequence belongs to the complex I 20 kDa subunit family. NDH is composed of at least 16 different subunits, 5 of which are encoded in the nucleus. It depends on [4Fe-4S] cluster as a cofactor.

Its subcellular location is the plastid. It is found in the chloroplast thylakoid membrane. It carries out the reaction a plastoquinone + NADH + (n+1) H(+)(in) = a plastoquinol + NAD(+) + n H(+)(out). The enzyme catalyses a plastoquinone + NADPH + (n+1) H(+)(in) = a plastoquinol + NADP(+) + n H(+)(out). In terms of biological role, NDH shuttles electrons from NAD(P)H:plastoquinone, via FMN and iron-sulfur (Fe-S) centers, to quinones in the photosynthetic chain and possibly in a chloroplast respiratory chain. The immediate electron acceptor for the enzyme in this species is believed to be plastoquinone. Couples the redox reaction to proton translocation, and thus conserves the redox energy in a proton gradient. This chain is NAD(P)H-quinone oxidoreductase subunit K, chloroplastic, found in Chlorokybus atmophyticus (Soil alga).